Consider the following 364-residue polypeptide: Histidinol-phosphate aminotransferase (364 aa).

At Lys-222 the chain carries N6-(pyridoxal phosphate)lysine.

This sequence belongs to the class-II pyridoxal-phosphate-dependent aminotransferase family. Histidinol-phosphate aminotransferase subfamily. As to quaternary structure, homodimer. Requires pyridoxal 5'-phosphate as cofactor.

The enzyme catalyses L-histidinol phosphate + 2-oxoglutarate = 3-(imidazol-4-yl)-2-oxopropyl phosphate + L-glutamate. The protein operates within amino-acid biosynthesis; L-histidine biosynthesis; L-histidine from 5-phospho-alpha-D-ribose 1-diphosphate: step 7/9. The protein is Histidinol-phosphate aminotransferase of Brevibacillus brevis (strain 47 / JCM 6285 / NBRC 100599).